We begin with the raw amino-acid sequence, 150 residues long: Ribosome-binding factor A (150 aa).

The tract at residues 126 to 150 is disordered; that stretch reads EVARDLSHDDDEDGGADEAPRNGDE.

Belongs to the RbfA family. As to quaternary structure, monomer. Binds 30S ribosomal subunits, but not 50S ribosomal subunits or 70S ribosomes.

It localises to the cytoplasm. One of several proteins that assist in the late maturation steps of the functional core of the 30S ribosomal subunit. Associates with free 30S ribosomal subunits (but not with 30S subunits that are part of 70S ribosomes or polysomes). Required for efficient processing of 16S rRNA. May interact with the 5'-terminal helix region of 16S rRNA. This is Ribosome-binding factor A from Brucella suis (strain ATCC 23445 / NCTC 10510).